The chain runs to 102 residues: PqqA binding protein (102 aa).

It belongs to the PqqD family. Monomer. Interacts with PqqE.

It participates in cofactor biosynthesis; pyrroloquinoline quinone biosynthesis. Functionally, functions as a PqqA binding protein and presents PqqA to PqqE, in the pyrroloquinoline quinone (PQQ) biosynthetic pathway. The chain is PqqA binding protein from Rhodopseudomonas palustris (strain TIE-1).